We begin with the raw amino-acid sequence, 449 residues long: Probable glycine dehydrogenase (decarboxylating) subunit 1 (449 aa).

Belongs to the GcvP family. N-terminal subunit subfamily. In terms of assembly, the glycine cleavage system is composed of four proteins: P, T, L and H. In this organism, the P 'protein' is a heterodimer of two subunits.

It catalyses the reaction N(6)-[(R)-lipoyl]-L-lysyl-[glycine-cleavage complex H protein] + glycine + H(+) = N(6)-[(R)-S(8)-aminomethyldihydrolipoyl]-L-lysyl-[glycine-cleavage complex H protein] + CO2. Its function is as follows. The glycine cleavage system catalyzes the degradation of glycine. The P protein binds the alpha-amino group of glycine through its pyridoxal phosphate cofactor; CO(2) is released and the remaining methylamine moiety is then transferred to the lipoamide cofactor of the H protein. The polypeptide is Probable glycine dehydrogenase (decarboxylating) subunit 1 (Pyrococcus horikoshii (strain ATCC 700860 / DSM 12428 / JCM 9974 / NBRC 100139 / OT-3)).